The following is a 427-amino-acid chain: UPF0229 protein YeaH (427 aa).

Residues 79 to 90 (NDHFIQNDRIER) are compositionally biased toward basic and acidic residues. Positions 79–110 (NDHFIQNDRIERPQGGGGGSGSGQGQASQDGE) are disordered. Residues 92-102 (QGGGGGSGSGQ) are compositionally biased toward gly residues.

This sequence belongs to the UPF0229 family.

The chain is UPF0229 protein YeaH from Salmonella paratyphi B (strain ATCC BAA-1250 / SPB7).